The sequence spans 135 residues: ATP synthase epsilon chain (135 aa).

The protein belongs to the ATPase epsilon chain family. As to quaternary structure, F-type ATPases have 2 components, CF(1) - the catalytic core - and CF(0) - the membrane proton channel. CF(1) has five subunits: alpha(3), beta(3), gamma(1), delta(1), epsilon(1). CF(0) has three main subunits: a, b and c.

It is found in the cell inner membrane. Produces ATP from ADP in the presence of a proton gradient across the membrane. This Rhodopseudomonas palustris (strain ATCC BAA-98 / CGA009) protein is ATP synthase epsilon chain.